The chain runs to 381 residues: Putrescine N-methyltransferase 3 (381 aa).

The tract at residues 21–81 is disordered; the sequence is MNGYQNGTSK…TISHDNGNEL (61 aa). Polar residues-rich tracts occupy residues 23–39 and 46–81; these read GYQNGTSKHQNGHQNGT and HQNGISEHQNGHQNGTSEHQNGHQNGTISHDNGNEL. Residues 92 to 329 enclose the PABS domain; the sequence is PGWFSEFSAL…GVIGYMLCST (238 aa). Residues Gln-123, Glu-198, and 229–230 contribute to the S-adenosyl-L-methionine site; that span reads DG. Catalysis depends on Asp-248, which acts as the Proton acceptor. S-adenosyl-L-methionine is bound at residue Tyr-317.

Belongs to the class I-like SAM-binding methyltransferase superfamily. Putrescine methyltransferase family. In terms of tissue distribution, predominantly expressed in roots.

It carries out the reaction putrescine + S-adenosyl-L-methionine = N-methylputrescine + S-adenosyl-L-homocysteine + H(+). The protein operates within alkaloid biosynthesis; nicotine biosynthesis. In terms of biological role, involved in the biosynthesis of pyridine alkaloid natural products, leading mainly to the production of anabasine, anatabine, nicotine and nornicotine, effective deterrents against herbivores with antiparasitic and pesticide properties (neurotoxins); nornicotine serves as the precursor in the synthesis of the carcinogen compound N'-nitrosonornicotine (NNN). Methyltransferase that mediates the conversion of putrescine to N-methylputrescine. Promotes leaves ripening. This is Putrescine N-methyltransferase 3 from Nicotiana tabacum (Common tobacco).